We begin with the raw amino-acid sequence, 478 residues long: NAD(+) hydrolase ThsA (478 aa).

Positions methionine 1–threonine 287 constitute a Deacetylase sirtuin-type domain. NAD(+)-binding residues include alanine 19, aspartate 110, and histidine 148. Catalysis depends on histidine 148, which acts as the Proton acceptor. The interval isoleucine 288 to aspartate 478 is SLOG (STALD) domain. Glycine 292, serine 293, leucine 330, arginine 373, lysine 390, glycine 401, and glutamate 405 together coordinate 3'cADPR.

This sequence belongs to the soluble Thoeris ThsA family. As to quaternary structure, homotetramer in solution.

It carries out the reaction NAD(+) + H2O = ADP-D-ribose + nicotinamide + H(+). Its activity is regulated as follows. Activated by 3'cADPR. In terms of biological role, NAD(+) hydrolyzing component (NADase) of the Thoeris antiviral defense system, composed of ThsA and ThsB (maybe AS248_15445). Activated by 3' cyclic ADP-D-ribose (3'cADPR) but not its isomers 2'cADPR, cADPR and very weakly by ADPR; binds 3'cADPR better than 2'cADPR. Upon activation binds and hydrolyzes NAD(+), leading to cell death and inhibition of phage replication. This Enterococcus faecium (Streptococcus faecium) protein is NAD(+) hydrolase ThsA.